The chain runs to 99 residues: Small ribosomal subunit protein bS20 (99 aa).

It belongs to the bacterial ribosomal protein bS20 family.

Its function is as follows. Binds directly to 16S ribosomal RNA. This chain is Small ribosomal subunit protein bS20, found in Thermomicrobium roseum (strain ATCC 27502 / DSM 5159 / P-2).